Reading from the N-terminus, the 298-residue chain is Glyoxalase domain-containing protein 4 (298 aa).

One can recognise a VOC 1 domain in the interval arginine 5–arginine 130. The residue at position 109 (lysine 109) is an N6-succinyllysine. Serine 131 is modified (phosphoserine). The region spanning proline 137–aspartate 258 is the VOC 2 domain. An N6-succinyllysine modification is found at lysine 273.

This sequence belongs to the glyoxalase I family. Interacts with NUDT9.

It is found in the mitochondrion. The polypeptide is Glyoxalase domain-containing protein 4 (Glod4) (Rattus norvegicus (Rat)).